The primary structure comprises 181 residues: Respiratory supercomplex factor 1, mitochondrial (181 aa).

Residues 6-97 form the HIG1 domain; it reads LPSSMEDNPQ…TERQQRREFE (92 aa). The next 2 helical transmembrane spans lie at 33–49 and 69–86; these read PLIP…LYRA and IYAQ…GMYF. The segment at 136–160 is disordered; it reads AAKEAGKRPAPNKIPEQDAARSAIE.

Belongs to the RCF1 family. As to quaternary structure, associates with the respiratory chain complex III/complex IV supercomplex.

Its subcellular location is the mitochondrion membrane. Functionally, cytochrome c oxidase subunit which plays a role in assembly of respiratory supercomplexes. The polypeptide is Respiratory supercomplex factor 1, mitochondrial (rcf1) (Neosartorya fischeri (strain ATCC 1020 / DSM 3700 / CBS 544.65 / FGSC A1164 / JCM 1740 / NRRL 181 / WB 181) (Aspergillus fischerianus)).